A 581-amino-acid polypeptide reads, in one-letter code: Serine/threonine protein phosphatase 2A 55 kDa regulatory subunit B alpha isoform (581 aa).

The interval 1–27 (MMNPDGGDGDRLEAAGAGSSSAQQGHP) is disordered. The segment covering 14–25 (AAGAGSSSAQQG) has biased composition (low complexity). WD repeat units follow at residues 47–86 (QEVD…DNAS) and 123–164 (EIEE…VKQV). Residues 172 to 189 (RSVGTGTSSSASTSSSRG) show a composition bias toward low complexity. The tract at residues 172–192 (RSVGTGTSSSASTSSSRGLLP) is disordered. 4 WD repeats span residues 241-279 (AHDY…QSFN), 290-330 (DLTE…LCDN), 349-387 (EIIA…GPVS), and 492-530 (DFST…RKFI).

It belongs to the phosphatase 2A regulatory subunit B family. As to quaternary structure, PP2A consists of a common heteromeric enzyme, composed of a catalytic subunit (subunits C), a constant regulatory subunit (subunit A), and a variety of regulatory subunits such as subunits B (the R2/B/PR55/B55, R3/B''/PR72/PR130/PR59 and R5/B'/B56 families).

The B regulatory subunit may modulate substrate selectivity and catalytic activity, and may also direct the localization of the catalytic enzyme to a particular subcellular compartment. This Oryza sativa subsp. japonica (Rice) protein is Serine/threonine protein phosphatase 2A 55 kDa regulatory subunit B alpha isoform.